Consider the following 469-residue polypeptide: Ribulose bisphosphate carboxylase large chain (469 aa).

Position 5 is an N6,N6,N6-trimethyllysine (Lys-5). Residues Asn-114 and Thr-164 each coordinate substrate. Lys-166 serves as the catalytic Proton acceptor. Lys-168 lines the substrate pocket. Residues Lys-192, Asp-194, and Glu-195 each contribute to the Mg(2+) site. At Lys-192 the chain carries N6-carboxylysine. His-285 functions as the Proton acceptor in the catalytic mechanism. Residues Arg-286, His-318, and Ser-370 each contribute to the substrate site.

Belongs to the RuBisCO large chain family. Type I subfamily. As to quaternary structure, heterohexadecamer of 8 large chains and 8 small chains; disulfide-linked. The disulfide link is formed within the large subunit homodimers. It depends on Mg(2+) as a cofactor. The disulfide bond which can form in the large chain dimeric partners within the hexadecamer appears to be associated with oxidative stress and protein turnover.

The protein localises to the plastid. The protein resides in the chloroplast. It catalyses the reaction 2 (2R)-3-phosphoglycerate + 2 H(+) = D-ribulose 1,5-bisphosphate + CO2 + H2O. The catalysed reaction is D-ribulose 1,5-bisphosphate + O2 = 2-phosphoglycolate + (2R)-3-phosphoglycerate + 2 H(+). Its function is as follows. RuBisCO catalyzes two reactions: the carboxylation of D-ribulose 1,5-bisphosphate, the primary event in carbon dioxide fixation, as well as the oxidative fragmentation of the pentose substrate in the photorespiration process. Both reactions occur simultaneously and in competition at the same active site. This Fleroya rubrostipulata (Mitragyna rubrostipulata) protein is Ribulose bisphosphate carboxylase large chain.